A 500-amino-acid polypeptide reads, in one-letter code: Lysine--tRNA ligase (500 aa).

Mg(2+) is bound by residues E410 and E417.

The protein belongs to the class-II aminoacyl-tRNA synthetase family. In terms of assembly, homodimer. The cofactor is Mg(2+).

The protein resides in the cytoplasm. The catalysed reaction is tRNA(Lys) + L-lysine + ATP = L-lysyl-tRNA(Lys) + AMP + diphosphate. This Pseudomonas fluorescens (strain ATCC BAA-477 / NRRL B-23932 / Pf-5) protein is Lysine--tRNA ligase.